A 366-amino-acid chain; its full sequence is Holliday junction branch migration complex subunit RuvB (366 aa).

The tract at residues 1–48 (MIDRLMAREAIYQQSNPDPGGDPPEDGPPHGKNAADGGDEPDRGPDPD) is disordered. A large ATPase domain (RuvB-L) region spans residues 21–212 (GDPPEDGPPH…FQIREHLGWY (192 aa)). Residues L51, R52, G93, K96, T97, T98, 159-161 (EDF), R202, Y212, and R249 contribute to the ATP site. Residue T97 coordinates Mg(2+). Residues 213-283 (TRKELAEIVL…VCEAALDMIG (71 aa)) are small ATPAse domain (RuvB-S). The interval 286–366 (HLGLDKQDRN…KRQMPDRPLS (81 aa)) is head domain (RuvB-H). Residues R341, R343, and R346 each coordinate DNA.

This sequence belongs to the RuvB family. Homohexamer. Forms an RuvA(8)-RuvB(12)-Holliday junction (HJ) complex. HJ DNA is sandwiched between 2 RuvA tetramers; dsDNA enters through RuvA and exits via RuvB. An RuvB hexamer assembles on each DNA strand where it exits the tetramer. Each RuvB hexamer is contacted by two RuvA subunits (via domain III) on 2 adjacent RuvB subunits; this complex drives branch migration. In the full resolvosome a probable DNA-RuvA(4)-RuvB(12)-RuvC(2) complex forms which resolves the HJ.

The protein localises to the cytoplasm. The catalysed reaction is ATP + H2O = ADP + phosphate + H(+). Functionally, the RuvA-RuvB-RuvC complex processes Holliday junction (HJ) DNA during genetic recombination and DNA repair, while the RuvA-RuvB complex plays an important role in the rescue of blocked DNA replication forks via replication fork reversal (RFR). RuvA specifically binds to HJ cruciform DNA, conferring on it an open structure. The RuvB hexamer acts as an ATP-dependent pump, pulling dsDNA into and through the RuvAB complex. RuvB forms 2 homohexamers on either side of HJ DNA bound by 1 or 2 RuvA tetramers; 4 subunits per hexamer contact DNA at a time. Coordinated motions by a converter formed by DNA-disengaged RuvB subunits stimulates ATP hydrolysis and nucleotide exchange. Immobilization of the converter enables RuvB to convert the ATP-contained energy into a lever motion, pulling 2 nucleotides of DNA out of the RuvA tetramer per ATP hydrolyzed, thus driving DNA branch migration. The RuvB motors rotate together with the DNA substrate, which together with the progressing nucleotide cycle form the mechanistic basis for DNA recombination by continuous HJ branch migration. Branch migration allows RuvC to scan DNA until it finds its consensus sequence, where it cleaves and resolves cruciform DNA. This chain is Holliday junction branch migration complex subunit RuvB, found in Rhodopirellula baltica (strain DSM 10527 / NCIMB 13988 / SH1).